A 500-amino-acid chain; its full sequence is 4-aminobutyrate aminotransferase, mitochondrial (500 aa).

The N-terminal 28 residues, Met-1–Ile-28, are a transit peptide targeting the mitochondrion. Cys-163 lines the [2Fe-2S] cluster pocket. Gly-164 to Ser-165 contributes to the pyridoxal 5'-phosphate binding site. Residue Cys-166 coordinates [2Fe-2S] cluster. Substrate is bound at residue Arg-220. An N6-succinyllysine modification is found at Lys-231. Lys-252 carries the post-translational modification N6-acetyllysine; alternate. Position 252 is an N6-succinyllysine; alternate (Lys-252). N6-acetyllysine occurs at positions 279 and 318. Residue Lys-357 is modified to N6-(pyridoxal phosphate)lysine. Thr-381 contacts pyridoxal 5'-phosphate. Lys-413 carries the N6-acetyllysine; alternate modification. Lys-413 is subject to N6-succinyllysine; alternate. Residues Lys-452 and Lys-470 each carry the N6-acetyllysine modification.

This sequence belongs to the class-III pyridoxal-phosphate-dependent aminotransferase family. In terms of assembly, homodimer; disulfide-linked. The cofactor is pyridoxal 5'-phosphate. [2Fe-2S] cluster is required as a cofactor.

The protein localises to the mitochondrion matrix. It carries out the reaction 4-aminobutanoate + 2-oxoglutarate = succinate semialdehyde + L-glutamate. It catalyses the reaction (S)-3-amino-2-methylpropanoate + 2-oxoglutarate = 2-methyl-3-oxopropanoate + L-glutamate. Its function is as follows. Catalyzes the conversion of gamma-aminobutyrate and L-beta-aminoisobutyrate to succinate semialdehyde and methylmalonate semialdehyde, respectively. Can also convert delta-aminovalerate and beta-alanine. This chain is 4-aminobutyrate aminotransferase, mitochondrial (ABAT), found in Bos taurus (Bovine).